Here is a 277-residue protein sequence, read N- to C-terminus: Diaminopimelate epimerase (277 aa).

3 residues coordinate substrate: asparagine 13, glutamine 46, and asparagine 66. The active-site Proton donor is the cysteine 75. Substrate contacts are provided by residues 76-77, asparagine 160, asparagine 193, and 211-212; these read GN and ER. Cysteine 220 functions as the Proton acceptor in the catalytic mechanism. 221–222 lines the substrate pocket; the sequence is GS.

The protein belongs to the diaminopimelate epimerase family. Homodimer.

It localises to the cytoplasm. It carries out the reaction (2S,6S)-2,6-diaminopimelate = meso-2,6-diaminopimelate. Its pathway is amino-acid biosynthesis; L-lysine biosynthesis via DAP pathway; DL-2,6-diaminopimelate from LL-2,6-diaminopimelate: step 1/1. Functionally, catalyzes the stereoinversion of LL-2,6-diaminopimelate (L,L-DAP) to meso-diaminopimelate (meso-DAP), a precursor of L-lysine and an essential component of the bacterial peptidoglycan. The chain is Diaminopimelate epimerase from Legionella pneumophila (strain Paris).